A 449-amino-acid chain; its full sequence is BPI fold-containing family B member 6 (449 aa).

A signal peptide spans 1-18; the sequence is MLCSLSLVLCGLLAGTRA. Asn115 carries N-linked (GlcNAc...) asparagine glycosylation. Cys138 and Cys172 are oxidised to a cystine.

Belongs to the BPI/LBP/Plunc superfamily. BPI/LBP family.

Its subcellular location is the secreted. This Mus musculus (Mouse) protein is BPI fold-containing family B member 6 (Bpifb6).